The following is a 279-amino-acid chain: Tryptophan 2,3-dioxygenase (279 aa).

Residues 48–52 (FIVIH), Tyr-110, and Arg-114 each bind substrate. His-237 contributes to the heme binding site. Thr-251 lines the substrate pocket.

It belongs to the tryptophan 2,3-dioxygenase family. In terms of assembly, homotetramer. Requires heme as cofactor.

The enzyme catalyses L-tryptophan + O2 = N-formyl-L-kynurenine. Its pathway is amino-acid degradation; L-tryptophan degradation via kynurenine pathway; L-kynurenine from L-tryptophan: step 1/2. Functionally, heme-dependent dioxygenase that catalyzes the oxidative cleavage of the L-tryptophan (L-Trp) pyrrole ring and converts L-tryptophan to N-formyl-L-kynurenine. Catalyzes the oxidative cleavage of the indole moiety. The protein is Tryptophan 2,3-dioxygenase of Bacillus thuringiensis (strain Al Hakam).